The chain runs to 509 residues: Glycogen synthase (509 aa).

Position 47 (Lys-47) interacts with ADP-alpha-D-glucose.

Belongs to the glycosyltransferase 1 family. Bacterial/plant glycogen synthase subfamily.

The catalysed reaction is [(1-&gt;4)-alpha-D-glucosyl](n) + ADP-alpha-D-glucose = [(1-&gt;4)-alpha-D-glucosyl](n+1) + ADP + H(+). It functions in the pathway glycan biosynthesis; glycogen biosynthesis. Synthesizes alpha-1,4-glucan chains using ADP-glucose. The chain is Glycogen synthase from Xanthomonas oryzae pv. oryzae (strain PXO99A).